The primary structure comprises 672 residues: tRNA 5-methylaminomethyl-2-thiouridine biosynthesis bifunctional protein MnmC (672 aa).

Residues 1-243 (MTSITHAELG…KREMIAGCME (243 aa)) form a tRNA (mnm(5)s(2)U34)-methyltransferase region. Positions 269–672 (IGGGIASAAL…LRKGKAITEL (404 aa)) are FAD-dependent cmnm(5)s(2)U34 oxidoreductase.

In the N-terminal section; belongs to the methyltransferase superfamily. tRNA (mnm(5)s(2)U34)-methyltransferase family. This sequence in the C-terminal section; belongs to the DAO family. FAD serves as cofactor.

It is found in the cytoplasm. It catalyses the reaction 5-aminomethyl-2-thiouridine(34) in tRNA + S-adenosyl-L-methionine = 5-methylaminomethyl-2-thiouridine(34) in tRNA + S-adenosyl-L-homocysteine + H(+). Functionally, catalyzes the last two steps in the biosynthesis of 5-methylaminomethyl-2-thiouridine (mnm(5)s(2)U) at the wobble position (U34) in tRNA. Catalyzes the FAD-dependent demodification of cmnm(5)s(2)U34 to nm(5)s(2)U34, followed by the transfer of a methyl group from S-adenosyl-L-methionine to nm(5)s(2)U34, to form mnm(5)s(2)U34. This is tRNA 5-methylaminomethyl-2-thiouridine biosynthesis bifunctional protein MnmC from Vibrio vulnificus (strain YJ016).